The following is a 316-amino-acid chain: Ribosomal RNA large subunit methyltransferase F (316 aa).

This sequence belongs to the methyltransferase superfamily. METTL16/RlmF family.

Its subcellular location is the cytoplasm. It carries out the reaction adenosine(1618) in 23S rRNA + S-adenosyl-L-methionine = N(6)-methyladenosine(1618) in 23S rRNA + S-adenosyl-L-homocysteine + H(+). Specifically methylates the adenine in position 1618 of 23S rRNA. The sequence is that of Ribosomal RNA large subunit methyltransferase F from Pseudomonas entomophila (strain L48).